Here is a 1270-residue protein sequence, read N- to C-terminus: Breakpoint cluster region protein (1270 aa).

Met1 bears the N-acetylmethionine mark. The segment at 1 to 428 is kinase; that stretch reads MVDSVGFAEA…DGDSTFQGEA (428 aa). Residues 28–55 adopt a coiled-coil conformation; that stretch reads VGDIEQELERCKASIRRLEQEVNQERFR. Residues 67–173 form a disordered region; sequence KKSYDRQRWG…GPAQPGSADA (107 aa). Low complexity predominate over residues 121–139; sequence GSPSKGRSASARRPAAAAS. Phosphoserine occurs at positions 122 and 139. The residue at position 178 (Tyr178) is a Phosphotyrosine; by HCK. Positions 198–387 are binding to ABL SH2-domain; sequence SDRISSLGSQ…QSFDSSSPPT (190 aa). 3 disordered regions span residues 201-249, 295-396, and 412-481; these read ISSL…DYED, KSPL…RHRQ, and TGQI…SGAL. 3 positions are modified to phosphoserine: Ser203, Ser216, and Ser237. The residue at position 247 (Tyr247) is a Phosphotyrosine; by FES. Composition is skewed to low complexity over residues 348 to 358 and 371 to 384; these read SSGQSSRVSPS and SPSQNSQQSFDSSS. A phosphoserine mark is found at Ser358, Ser379, and Ser384. Thr387 bears the Phosphothreonine mark. Phosphoserine is present on residues Ser461 and Ser465. Arg473 is modified (omega-N-methylarginine). 2 positions are modified to phosphoserine: Ser475 and Ser487. In terms of domain architecture, DH spans 497–690; the sequence is MRKWVLSGIL…QNFLSSINEE (194 aa). The residue at position 553 (Tyr553) is a Phosphotyrosine. Thr640 is modified (phosphothreonine). Tyr643 is modified (phosphotyrosine). Thr692 is modified (phosphothreonine). A PH domain is found at 707-865; the sequence is QLLKDSFMVE…WRESIREQQK (159 aa). In terms of domain architecture, C2 spans 892 to 1019; sequence HHIPLTINKE…QDRDWQRTVI (128 aa). A Rho-GAP domain is found at 1053-1247; sequence VKIAVVTKRE…VMSQVQVLLY (195 aa). Ser1263 is modified (phosphoserine).

In terms of assembly, homotetramer. Interacts with PDZK1. Interacts with HCK, FES/FPS, ABL1, PIK3R1 and GRB2. May interact with CCPG1. Interacts with SH2D5. Interacts with DLG4. In terms of processing, autophosphorylated. Phosphorylated by FES/FPS on tyrosine residues, leading to down-regulation of the BCR kinase activity. Phosphorylation at Tyr-178 by HCK is important for interaction with GRB2. As to expression, expressed in brain. In hippocampal subregions, most abundant in the CA1 region and expressed at successively lower levels in the dentate gyrus and the CA3 region.

The protein localises to the postsynaptic density. The protein resides in the cell projection. Its subcellular location is the dendritic spine. It is found in the axon. It localises to the synapse. It carries out the reaction L-seryl-[protein] + ATP = O-phospho-L-seryl-[protein] + ADP + H(+). The catalysed reaction is L-threonyl-[protein] + ATP = O-phospho-L-threonyl-[protein] + ADP + H(+). Protein with a unique structure having two opposing regulatory activities toward small GTP-binding proteins. The C-terminus is a GTPase-activating protein (GAP) domain which stimulates GTP hydrolysis by RAC1, RAC2 and CDC42. Accelerates the intrinsic rate of GTP hydrolysis of RAC1 or CDC42, leading to down-regulation of the active GTP-bound form. The central Dbl homology (DH) domain functions as guanine nucleotide exchange factor (GEF) that modulates the GTPases CDC42, RHOA and RAC1. Promotes the conversion of CDC42, RHOA and RAC1 from the GDP-bound to the GTP-bound form. The amino terminus contains an intrinsic kinase activity. Functions as an important negative regulator of neuronal RAC1 activity. Regulates macrophage functions such as CSF1-directed motility and phagocytosis through the modulation of RAC1 activity. Plays a major role as a RHOA GEF in keratinocytes being involved in focal adhesion formation and keratinocyte differentiation. This is Breakpoint cluster region protein from Mus musculus (Mouse).